Reading from the N-terminus, the 298-residue chain is Glycine--tRNA ligase alpha subunit (298 aa).

It belongs to the class-II aminoacyl-tRNA synthetase family. As to quaternary structure, tetramer of two alpha and two beta subunits.

Its subcellular location is the cytoplasm. The enzyme catalyses tRNA(Gly) + glycine + ATP = glycyl-tRNA(Gly) + AMP + diphosphate. The polypeptide is Glycine--tRNA ligase alpha subunit (Helicobacter pylori (strain G27)).